Consider the following 286-residue polypeptide: Protease HtpX homolog (286 aa).

2 consecutive transmembrane segments (helical) span residues 7 to 27 and 29 to 49; these read TFMLMAAITALFIVIGGMIGG and SGMMLALLFALGMNFFSYWFS. Residue histidine 131 participates in Zn(2+) binding. Glutamate 132 is a catalytic residue. Histidine 135 serves as a coordination point for Zn(2+). The next 2 membrane-spanning stretches (helical) occupy residues 146 to 166 and 177 to 197; these read LSATMAGAISALANFAVFFGG and IAGIAVAILAPLAASLIQMAI. Residue glutamate 202 participates in Zn(2+) binding.

This sequence belongs to the peptidase M48B family. Zn(2+) is required as a cofactor.

It is found in the cell inner membrane. In Ralstonia nicotianae (strain ATCC BAA-1114 / GMI1000) (Ralstonia solanacearum), this protein is Protease HtpX homolog.